We begin with the raw amino-acid sequence, 206 residues long: Large ribosomal subunit protein uL4 (206 aa).

The interval alanine 43 to glutamate 94 is disordered. Residues histidine 58–glycine 70 show a composition bias toward basic residues.

This sequence belongs to the universal ribosomal protein uL4 family. Part of the 50S ribosomal subunit.

One of the primary rRNA binding proteins, this protein initially binds near the 5'-end of the 23S rRNA. It is important during the early stages of 50S assembly. It makes multiple contacts with different domains of the 23S rRNA in the assembled 50S subunit and ribosome. Functionally, forms part of the polypeptide exit tunnel. The sequence is that of Large ribosomal subunit protein uL4 from Polynucleobacter asymbioticus (strain DSM 18221 / CIP 109841 / QLW-P1DMWA-1) (Polynucleobacter necessarius subsp. asymbioticus).